The following is a 142-amino-acid chain: MRVILGSDLDGIKLKAEMKQYLLQEKVEVIDKSESASEDFIEATLAVAHEVLKDTESLGIVFDGYGAGSFMTAAKIKGMIVAELSDERSAYMAREHNNARMITVGAKIVGTELAKNIIKEFLTGHYAGGRHQIRVDMLNKMA.

The protein belongs to the LacAB/RpiB family. In terms of assembly, heteromultimeric protein consisting of LacA and LacB.

It catalyses the reaction aldehydo-D-galactose 6-phosphate = keto-D-tagatose 6-phosphate. The protein operates within carbohydrate metabolism; D-galactose 6-phosphate degradation; D-tagatose 6-phosphate from D-galactose 6-phosphate: step 1/1. In Enterococcus faecalis (strain ATCC 700802 / V583), this protein is Galactose-6-phosphate isomerase subunit LacA.